The primary structure comprises 356 residues: Histidinol-phosphate aminotransferase 1 (356 aa).

Position 213 is an N6-(pyridoxal phosphate)lysine (Lys-213).

Belongs to the class-II pyridoxal-phosphate-dependent aminotransferase family. Histidinol-phosphate aminotransferase subfamily. In terms of assembly, homodimer. Pyridoxal 5'-phosphate is required as a cofactor.

The enzyme catalyses L-histidinol phosphate + 2-oxoglutarate = 3-(imidazol-4-yl)-2-oxopropyl phosphate + L-glutamate. It participates in amino-acid biosynthesis; L-histidine biosynthesis; L-histidine from 5-phospho-alpha-D-ribose 1-diphosphate: step 7/9. The sequence is that of Histidinol-phosphate aminotransferase 1 (hisC1) from Bordetella parapertussis (strain 12822 / ATCC BAA-587 / NCTC 13253).